A 335-amino-acid polypeptide reads, in one-letter code: NAC domain-containing protein 60 (335 aa).

The NAC domain occupies 14–156 (TFPGFKFSPT…ALVICRLRRN (143 aa)). Residues 112–162 (IGTKRTLVFHIGRAPKGGRTEWLMHEYCMIGVSLDALVICRLRRNTEFQGS) mediate DNA binding. Residues 315-335 (ARWDVVVWLLVMIAVLVFYLV) form a helical membrane-spanning segment.

Expressed in roots, rosette leaves, cauline leaves, shoot apex, stems and flowers.

It localises to the membrane. The protein localises to the nucleus. Functionally, transcriptional activator activated by proteolytic cleavage through regulated intramembrane proteolysis (RIP). Transcription factor involved in modulation of abscisic acid (ABA) signaling. Attenuates ABA sensitivity and glucose-induced ABA accumulation. Reduces the expression of ABI4 gene. The sequence is that of NAC domain-containing protein 60 from Arabidopsis thaliana (Mouse-ear cress).